Reading from the N-terminus, the 381-residue chain is tRNA pseudouridine synthase Pus10 (381 aa).

Catalysis depends on aspartate 226, which acts as the Nucleophile.

It belongs to the pseudouridine synthase Pus10 family.

The enzyme catalyses uridine(54) in tRNA = pseudouridine(54) in tRNA. The catalysed reaction is uridine(55) in tRNA = pseudouridine(55) in tRNA. Responsible for synthesis of pseudouridine from uracil-54 and uracil-55 in the psi GC loop of transfer RNAs. This chain is tRNA pseudouridine synthase Pus10, found in Nitrosopumilus maritimus (strain SCM1).